The chain runs to 98 residues: Integration host factor subunit alpha (98 aa).

The interval 49-72 (FGNFDLRDKNQRPGRNPKTGEDIP) is disordered.

The protein belongs to the bacterial histone-like protein family. Heterodimer of an alpha and a beta chain.

Functionally, this protein is one of the two subunits of integration host factor, a specific DNA-binding protein that functions in genetic recombination as well as in transcriptional and translational control. This is Integration host factor subunit alpha from Shewanella loihica (strain ATCC BAA-1088 / PV-4).